Consider the following 135-residue polypeptide: ATP synthase epsilon chain (135 aa).

The protein belongs to the ATPase epsilon chain family. F-type ATPases have 2 components, CF(1) - the catalytic core - and CF(0) - the membrane proton channel. CF(1) has five subunits: alpha(3), beta(3), gamma(1), delta(1), epsilon(1). CF(0) has three main subunits: a, b and c.

It localises to the cell inner membrane. Produces ATP from ADP in the presence of a proton gradient across the membrane. This is ATP synthase epsilon chain from Hyphomonas neptunium (strain ATCC 15444).